Reading from the N-terminus, the 111-residue chain is Heavy metal-associated isoprenylated plant protein 10 (111 aa).

Residues 1–68 enclose the HMA domain; it reads MQETVVFEWG…ICDYVDITAV (68 aa). The segment at 68–111 is disordered; it reads VGPEGQPAQNRNPVKKPEPKVIRGRPYPPQKKTPGKNSDECIIL. Cys108 is modified (cysteine methyl ester). Residue Cys108 is the site of S-farnesyl cysteine attachment. The propeptide at 109-111 is removed in mature form; the sequence is IIL.

The protein belongs to the HIPP family.

In terms of biological role, probable heavy-metal-binding protein. This chain is Heavy metal-associated isoprenylated plant protein 10, found in Arabidopsis thaliana (Mouse-ear cress).